The following is a 203-amino-acid chain: Transmembrane protein 269 (203 aa).

3 helical membrane passes run 60–80 (GLAS…LAII), 124–144 (FILC…SYYP), and 157–177 (LVYI…SAFY).

Its subcellular location is the membrane. This Homo sapiens (Human) protein is Transmembrane protein 269.